The following is a 159-amino-acid chain: Cytochrome c-type biogenesis protein CcmE (159 aa).

Over 1 to 7 (MTPRQRR) the chain is Cytoplasmic. A helical; Signal-anchor for type II membrane protein membrane pass occupies residues 8–28 (LGMLLAALACAGIALALVLNA). Topologically, residues 29–159 (FRSNLVFFFS…LAEGERETQR (131 aa)) are periplasmic. Heme contacts are provided by histidine 123 and tyrosine 127.

The protein belongs to the CcmE/CycJ family.

Its subcellular location is the cell inner membrane. Heme chaperone required for the biogenesis of c-type cytochromes. Transiently binds heme delivered by CcmC and transfers the heme to apo-cytochromes in a process facilitated by CcmF and CcmH. The sequence is that of Cytochrome c-type biogenesis protein CcmE from Cupriavidus pinatubonensis (strain JMP 134 / LMG 1197) (Cupriavidus necator (strain JMP 134)).